The sequence spans 360 residues: Peptide chain release factor 1 (360 aa).

An N5-methylglutamine modification is found at glutamine 235.

This sequence belongs to the prokaryotic/mitochondrial release factor family. In terms of processing, methylated by PrmC. Methylation increases the termination efficiency of RF1.

The protein localises to the cytoplasm. Functionally, peptide chain release factor 1 directs the termination of translation in response to the peptide chain termination codons UAG and UAA. The sequence is that of Peptide chain release factor 1 from Blochmanniella pennsylvanica (strain BPEN).